A 369-amino-acid polypeptide reads, in one-letter code: D-alanine--D-alanine ligase (369 aa).

Positions 152 to 359 (KKLFAAEGLP…YPSLLATMVE (208 aa)) constitute an ATP-grasp domain. 180-235 (RERLGLPVFVKPARGGSSIGVSRVSSWDELDAAVAAARDHDPKVIVEAAIAGRELE) contributes to the ATP binding site. Residues D314, E326, and N328 each contribute to the Mg(2+) site.

This sequence belongs to the D-alanine--D-alanine ligase family. Mg(2+) is required as a cofactor. Mn(2+) serves as cofactor.

It is found in the cytoplasm. It catalyses the reaction 2 D-alanine + ATP = D-alanyl-D-alanine + ADP + phosphate + H(+). It functions in the pathway cell wall biogenesis; peptidoglycan biosynthesis. Its function is as follows. Cell wall formation. The chain is D-alanine--D-alanine ligase from Mycobacterium avium (strain 104).